Here is a 95-residue protein sequence, read N- to C-terminus: MTITKNKISLMLNSKLGFSNNLCEEIVNTVFSNILEIAKVQKLTLKNFGSFEVKQKKQRPGINFHTKSPVMIASKKNLRFSPSEKLKALINKSMR.

The protein belongs to the bacterial histone-like protein family.

The chain is Histone-like DNA-binding protein from Rickettsia typhi (strain ATCC VR-144 / Wilmington).